The primary structure comprises 116 residues: Putative iron-sulfur cluster insertion protein ErpA (116 aa).

Iron-sulfur cluster contacts are provided by cysteine 44, cysteine 108, and cysteine 110.

The protein belongs to the HesB/IscA family. In terms of assembly, homodimer. It depends on iron-sulfur cluster as a cofactor.

Required for insertion of 4Fe-4S clusters. In Azoarcus sp. (strain BH72), this protein is Putative iron-sulfur cluster insertion protein ErpA.